A 361-amino-acid polypeptide reads, in one-letter code: Phospho-N-acetylmuramoyl-pentapeptide-transferase (361 aa).

The next 10 membrane-spanning stretches (helical) occupy residues 26 to 46 (AGGA…CIIE), 71 to 91 (TPTM…FLWA), 97 to 117 (FILW…CDDY), 134 to 154 (IFGQ…FPSN), 168 to 188 (GFFI…IVGS), 200 to 220 (GLAI…AYFA), 236 to 256 (GAGE…GFLW), 264 to 284 (IFMG…VSLF), 290 to 310 (VLVL…IQIF), and 338 to 358 (KVTV…FASL).

It belongs to the glycosyltransferase 4 family. MraY subfamily. It depends on Mg(2+) as a cofactor.

The protein localises to the cell membrane. It catalyses the reaction UDP-N-acetyl-alpha-D-muramoyl-L-alanyl-gamma-D-glutamyl-meso-2,6-diaminopimeloyl-D-alanyl-D-alanine + di-trans,octa-cis-undecaprenyl phosphate = di-trans,octa-cis-undecaprenyl diphospho-N-acetyl-alpha-D-muramoyl-L-alanyl-D-glutamyl-meso-2,6-diaminopimeloyl-D-alanyl-D-alanine + UMP. The protein operates within cell wall biogenesis; peptidoglycan biosynthesis. Catalyzes the initial step of the lipid cycle reactions in the biosynthesis of the cell wall peptidoglycan: transfers peptidoglycan precursor phospho-MurNAc-pentapeptide from UDP-MurNAc-pentapeptide onto the lipid carrier undecaprenyl phosphate, yielding undecaprenyl-pyrophosphoryl-MurNAc-pentapeptide, known as lipid I. In Endomicrobium trichonymphae, this protein is Phospho-N-acetylmuramoyl-pentapeptide-transferase.